A 110-amino-acid chain; its full sequence is Large ribosomal subunit protein uL22 (110 aa).

Basic residues predominate over residues 84 to 95; it reads ARGTASKIRKPT. The segment at 84–110 is disordered; sequence ARGTASKIRKPTSHVMVEVSKPEKKEA.

Belongs to the universal ribosomal protein uL22 family. Part of the 50S ribosomal subunit.

This protein binds specifically to 23S rRNA; its binding is stimulated by other ribosomal proteins, e.g. L4, L17, and L20. It is important during the early stages of 50S assembly. It makes multiple contacts with different domains of the 23S rRNA in the assembled 50S subunit and ribosome. In terms of biological role, the globular domain of the protein is located near the polypeptide exit tunnel on the outside of the subunit, while an extended beta-hairpin is found that lines the wall of the exit tunnel in the center of the 70S ribosome. This is Large ribosomal subunit protein uL22 from Campylobacter concisus (strain 13826).